A 520-amino-acid chain; its full sequence is MSRFHSLLAFVVASLTAVAHAGIGPVADLTITNAAVSPDGFSRQAVVVNGGTPGPLITGNMGDRFQLNVIDNLTNHTMVKSTSIHWHGFFQKGTNWADGPAFINQCPISSGHSFLYDFQVPDQAGTFWYHSHLSTQYCDGLRGPFVVYDPNDPAADLYDVDNDDTVITLVDWYHVAAKLGPAFPLGADATLINGKGRSPSTTTADLSVISVTPGKRYRFRLVSLSCDPNYTFSIDGHNMTIIETDSINTAPLVVDSIQIFAAQRYSFVLEANQAVDNYWIRANPNFGNVGFTGGINSAILRYDGAAAVEPTTTQTTSTAPLNEVNLHPLVTTAVPGSPVAGGVDLAINMAFNFNGTNFFINGTSFTPPTVPVLLQIISGAQNAQDLLPSGSVYSLPSNADIEISFPATAAAPGAPHPFHLHGHAFAVVRSAGSTVYNYDNPIFRDVVSTGTPAAGDNVTIRFRTDNPGPWFLHCHIDFHLEAGFAVVFAEDIPDVASANPVPQAWSDLCPTYDALDPSDQ.

An N-terminal signal peptide occupies residues 1–21 (MSRFHSLLAFVVASLTAVAHA). 2 consecutive Plastocyanin-like domains span residues 23 to 148 (IGPV…FVVY) and 160 to 302 (VDND…ILRY). Asparagine 72 and asparagine 75 each carry an N-linked (GlcNAc...) asparagine glycan. Cu cation-binding residues include histidine 85, histidine 87, histidine 130, and histidine 132. 2 cysteine pairs are disulfide-bonded: cysteine 106–cysteine 509 and cysteine 138–cysteine 226. Residues asparagine 229, asparagine 238, asparagine 354, and asparagine 361 are each glycosylated (N-linked (GlcNAc...) asparagine). The Plastocyanin-like 3 domain occupies 369–491 (TVPVLLQIIS…AGFAVVFAED (123 aa)). 7 residues coordinate Cu cation: histidine 416, histidine 419, histidine 421, histidine 473, cysteine 474, histidine 475, and histidine 479.

Belongs to the multicopper oxidase family. Homodimer. Cu cation serves as cofactor.

The protein resides in the secreted. The catalysed reaction is 4 hydroquinone + O2 = 4 benzosemiquinone + 2 H2O. Lignin degradation and detoxification of lignin-derived products. The protein is Laccase-1 of Trametes villosa (White-rot fungus).